The primary structure comprises 158 residues: 2-C-methyl-D-erythritol 2,4-cyclodiphosphate synthase (158 aa).

Residues Asp8 and His10 each contribute to the a divalent metal cation site. 4-CDP-2-C-methyl-D-erythritol 2-phosphate is bound by residues 8–10 (DAH) and 34–35 (HS). Residue His42 participates in a divalent metal cation binding. Residues 56–58 (DIG), 132–135 (TTTE), and Arg142 contribute to the 4-CDP-2-C-methyl-D-erythritol 2-phosphate site.

It belongs to the IspF family. In terms of assembly, homotrimer. A divalent metal cation serves as cofactor.

It carries out the reaction 4-CDP-2-C-methyl-D-erythritol 2-phosphate = 2-C-methyl-D-erythritol 2,4-cyclic diphosphate + CMP. It functions in the pathway isoprenoid biosynthesis; isopentenyl diphosphate biosynthesis via DXP pathway; isopentenyl diphosphate from 1-deoxy-D-xylulose 5-phosphate: step 4/6. Its function is as follows. Involved in the biosynthesis of isopentenyl diphosphate (IPP) and dimethylallyl diphosphate (DMAPP), two major building blocks of isoprenoid compounds. Catalyzes the conversion of 4-diphosphocytidyl-2-C-methyl-D-erythritol 2-phosphate (CDP-ME2P) to 2-C-methyl-D-erythritol 2,4-cyclodiphosphate (ME-CPP) with a corresponding release of cytidine 5-monophosphate (CMP). The polypeptide is 2-C-methyl-D-erythritol 2,4-cyclodiphosphate synthase (Nitrosococcus oceani (strain ATCC 19707 / BCRC 17464 / JCM 30415 / NCIMB 11848 / C-107)).